Here is a 164-residue protein sequence, read N- to C-terminus: 6,7-dimethyl-8-ribityllumazine synthase 1 (164 aa).

5-amino-6-(D-ribitylamino)uracil-binding positions include Phe-27, 58–60 (SLE), and 87–89 (TII). (2S)-2-hydroxy-3-oxobutyl phosphate is bound at residue 92–93 (DT). His-95 (proton donor) is an active-site residue. Asn-120 lines the 5-amino-6-(D-ribitylamino)uracil pocket. Arg-134 contacts (2S)-2-hydroxy-3-oxobutyl phosphate.

Belongs to the DMRL synthase family. As to quaternary structure, homopentamer.

It catalyses the reaction (2S)-2-hydroxy-3-oxobutyl phosphate + 5-amino-6-(D-ribitylamino)uracil = 6,7-dimethyl-8-(1-D-ribityl)lumazine + phosphate + 2 H2O + H(+). The protein operates within cofactor biosynthesis; riboflavin biosynthesis; riboflavin from 2-hydroxy-3-oxobutyl phosphate and 5-amino-6-(D-ribitylamino)uracil: step 1/2. Its function is as follows. Catalyzes the formation of 6,7-dimethyl-8-ribityllumazine by condensation of 5-amino-6-(D-ribitylamino)uracil with 3,4-dihydroxy-2-butanone 4-phosphate. This is the penultimate step in the biosynthesis of riboflavin. This chain is 6,7-dimethyl-8-ribityllumazine synthase 1 (ribH1), found in Mesorhizobium japonicum (strain LMG 29417 / CECT 9101 / MAFF 303099) (Mesorhizobium loti (strain MAFF 303099)).